A 506-amino-acid chain; its full sequence is Lysine--tRNA ligase (506 aa).

Residues glutamate 416 and glutamate 423 each contribute to the Mg(2+) site.

It belongs to the class-II aminoacyl-tRNA synthetase family. Homodimer. Mg(2+) serves as cofactor.

Its subcellular location is the cytoplasm. The enzyme catalyses tRNA(Lys) + L-lysine + ATP = L-lysyl-tRNA(Lys) + AMP + diphosphate. The polypeptide is Lysine--tRNA ligase (Xylella fastidiosa (strain M23)).